A 266-amino-acid chain; its full sequence is Indole-3-glycerol phosphate synthase (266 aa).

The protein belongs to the TrpC family.

The catalysed reaction is 1-(2-carboxyphenylamino)-1-deoxy-D-ribulose 5-phosphate + H(+) = (1S,2R)-1-C-(indol-3-yl)glycerol 3-phosphate + CO2 + H2O. The protein operates within amino-acid biosynthesis; L-tryptophan biosynthesis; L-tryptophan from chorismate: step 4/5. This Janthinobacterium sp. (strain Marseille) (Minibacterium massiliensis) protein is Indole-3-glycerol phosphate synthase.